The following is a 504-amino-acid chain: Maturase K (504 aa).

It belongs to the intron maturase 2 family. MatK subfamily.

The protein localises to the plastid. It is found in the chloroplast. Its function is as follows. Usually encoded in the trnK tRNA gene intron. Probably assists in splicing its own and other chloroplast group II introns. The chain is Maturase K from Nepenthes alata (Winged pitcher plant).